A 358-amino-acid polypeptide reads, in one-letter code: Protein-glutamate methylesterase/protein-glutamine glutaminase 1 (358 aa).

Positions 8-125 constitute a Response regulatory domain; sequence RVLIVDDSAV…ARGLEGYAEE (118 aa). The residue at position 59 (Asp-59) is a 4-aspartylphosphate. Residues 165 to 352 form the CheB-type methylesterase domain; sequence FRTTDRLIAI…LDRVAERLLA (188 aa). Residues Ser-177, His-203, and Asp-299 contribute to the active site.

Belongs to the CheB family. Phosphorylated by CheA. Phosphorylation of the N-terminal regulatory domain activates the methylesterase activity.

The protein localises to the cytoplasm. It carries out the reaction [protein]-L-glutamate 5-O-methyl ester + H2O = L-glutamyl-[protein] + methanol + H(+). The catalysed reaction is L-glutaminyl-[protein] + H2O = L-glutamyl-[protein] + NH4(+). Functionally, involved in chemotaxis. Part of a chemotaxis signal transduction system that modulates chemotaxis in response to various stimuli. Catalyzes the demethylation of specific methylglutamate residues introduced into the chemoreceptors (methyl-accepting chemotaxis proteins or MCP) by CheR. Also mediates the irreversible deamidation of specific glutamine residues to glutamic acid. This chain is Protein-glutamate methylesterase/protein-glutamine glutaminase 1, found in Xanthomonas axonopodis pv. citri (strain 306).